Consider the following 461-residue polypeptide: Photosystem II CP43 reaction center protein (461 aa).

The propeptide occupies 1–2; sequence ME. Thr-3 carries the post-translational modification N-acetylthreonine. Thr-3 is subject to Phosphothreonine. 5 helical membrane passes run 57-81, 122-143, 166-188, 243-263, and 279-300; these read LFEVAHFVPEKPMYEQGLILLPHLA, LLGPETLEESFPFFGYVWKDRN, KASYFGGIYDTWAPGGGDVRKIT, KPFAWARRALVWSGEAYLSYS, and WFNNTAYPSEFYGPTGPEASQA. Glu-355 contacts [CaMn4O5] cluster. Residues 435–459 traverse the membrane as a helical segment; sequence RARAAAAGFEKGIDRDFEPVLSMTP.

This sequence belongs to the PsbB/PsbC family. PsbC subfamily. In terms of assembly, PSII is composed of 1 copy each of membrane proteins PsbA, PsbB, PsbC, PsbD, PsbE, PsbF, PsbH, PsbI, PsbJ, PsbK, PsbL, PsbM, PsbT, PsbX, PsbY, PsbZ, Psb30/Ycf12, at least 3 peripheral proteins of the oxygen-evolving complex and a large number of cofactors. It forms dimeric complexes. Binds multiple chlorophylls and provides some of the ligands for the Ca-4Mn-5O cluster of the oxygen-evolving complex. It may also provide a ligand for a Cl- that is required for oxygen evolution. PSII binds additional chlorophylls, carotenoids and specific lipids. serves as cofactor.

The protein resides in the plastid. Its subcellular location is the chloroplast thylakoid membrane. Functionally, one of the components of the core complex of photosystem II (PSII). It binds chlorophyll and helps catalyze the primary light-induced photochemical processes of PSII. PSII is a light-driven water:plastoquinone oxidoreductase, using light energy to abstract electrons from H(2)O, generating O(2) and a proton gradient subsequently used for ATP formation. This is Photosystem II CP43 reaction center protein from Lotus japonicus (Lotus corniculatus var. japonicus).